We begin with the raw amino-acid sequence, 446 residues long: NADH-quinone oxidoreductase subunit D (446 aa).

The protein belongs to the complex I 49 kDa subunit family. NDH-1 is composed of 14 different subunits. Subunits NuoB, C, D, E, F, and G constitute the peripheral sector of the complex.

It is found in the cell membrane. It catalyses the reaction a quinone + NADH + 5 H(+)(in) = a quinol + NAD(+) + 4 H(+)(out). Functionally, NDH-1 shuttles electrons from NADH, via FMN and iron-sulfur (Fe-S) centers, to quinones in the respiratory chain. The immediate electron acceptor for the enzyme in this species is believed to be a menaquinone. Couples the redox reaction to proton translocation (for every two electrons transferred, four hydrogen ions are translocated across the cytoplasmic membrane), and thus conserves the redox energy in a proton gradient. This is NADH-quinone oxidoreductase subunit D from Nocardioides sp. (strain ATCC BAA-499 / JS614).